Here is a 348-residue protein sequence, read N- to C-terminus: Bombesin receptor-activated protein C6orf89 homolog (348 aa).

The Cytoplasmic portion of the chain corresponds to 1–58; the sequence is MDLAANEISIYDKLSETVDLVRQTGHQCGMSEKAIEKFIRQLLEKNEPQRGPPQYPLL. A helical membrane pass occupies residues 59 to 79; the sequence is IAVYKVLLTLGLILFTAYFVI. At 80–348 the chain is on the extracellular side; the sequence is QPFSSLAPEP…ICDGTTLSDL (269 aa).

In terms of assembly, homodimer. Interacts with BRS3. Interacts (via N-terminus) with SIN3B. Post-translationally, glycosylated.

The protein resides in the golgi apparatus membrane. The protein localises to the cytoplasm. Its function is as follows. Exhibits histone deacetylase (HDAC) enhancer properties. May play a role in cell cycle progression and wound repair of bronchial epithelial cells. This Mus musculus (Mouse) protein is Bombesin receptor-activated protein C6orf89 homolog.